The primary structure comprises 245 residues: Orotidine 5'-phosphate decarboxylase (245 aa).

Substrate is bound by residues Asp-22, Lys-44, 71–80, Thr-131, Arg-192, Gln-201, Gly-221, and Arg-222; that span reads DLKFHDIPNT. Residue Lys-73 is the Proton donor of the active site.

Belongs to the OMP decarboxylase family. Type 1 subfamily. In terms of assembly, homodimer.

The enzyme catalyses orotidine 5'-phosphate + H(+) = UMP + CO2. The protein operates within pyrimidine metabolism; UMP biosynthesis via de novo pathway; UMP from orotate: step 2/2. Catalyzes the decarboxylation of orotidine 5'-monophosphate (OMP) to uridine 5'-monophosphate (UMP). This is Orotidine 5'-phosphate decarboxylase from Yersinia pestis bv. Antiqua (strain Antiqua).